Consider the following 312-residue polypeptide: uncharacterized protein (312 aa).

10 helical membrane-spanning segments follow: residues Ala13–Ile33, Ala45–Tyr65, Ala81–Asn101, Ala105–Cys125, Ile133–Trp153, Met162–Ser182, Gly198–Met218, Met229–Leu249, Ala260–Gly280, and Leu283–Tyr303. Residues Ala173–Tyr303 form the EamA domain.

The protein belongs to the EamA transporter family.

The protein localises to the cell membrane. This is an uncharacterized protein from Bacillus subtilis (strain 168).